The primary structure comprises 648 residues: Primary amine oxidase (648 aa).

Residues 1 to 9 (MTLNAESEA) constitute a propeptide that is removed on maturation. Substrate is bound at residue 299-310 (AFDSGEYNIGNM). The active-site Proton acceptor is Asp301. An intrachain disulfide couples Cys320 to Cys346. Position 382–387 (382–387 (VANYEY)) interacts with substrate. The Schiff-base intermediate with substrate; via topaquinone role is filled by Tyr385. The residue at position 385 (Tyr385) is a 2',4',5'-topaquinone. Cu cation is bound by residues His436 and His438. Mn(2+)-binding residues include Asp445, Phe446, and Asp584. Residue His595 participates in Cu cation binding.

It belongs to the copper/topaquinone oxidase family. Homodimer. Cu cation is required as a cofactor. The cofactor is Zn(2+). Requires L-topaquinone as cofactor. It depends on Mn(2+) as a cofactor. In terms of processing, topaquinone (TPQ) is generated by copper-dependent autoxidation of a specific tyrosyl residue.

The catalysed reaction is a primary methyl amine + O2 + H2O = an aldehyde + H2O2 + NH4(+). Functionally, the exact function of MaoXI is not known. This is Primary amine oxidase (maoI) from Arthrobacter sp. (strain P1).